A 236-amino-acid chain; its full sequence is Purine nucleoside phosphorylase DeoD-type (236 aa).

H5 contacts a purine D-ribonucleoside. Phosphate is bound by residues G21, R25, R44, and 88–91 (RVGT). A purine D-ribonucleoside contacts are provided by residues 180-182 (EME) and 204-205 (SD). Residue D205 is the Proton donor of the active site.

The protein belongs to the PNP/UDP phosphorylase family. Homohexamer; trimer of homodimers.

The catalysed reaction is a purine D-ribonucleoside + phosphate = a purine nucleobase + alpha-D-ribose 1-phosphate. It catalyses the reaction a purine 2'-deoxy-D-ribonucleoside + phosphate = a purine nucleobase + 2-deoxy-alpha-D-ribose 1-phosphate. Catalyzes the reversible phosphorolytic breakdown of the N-glycosidic bond in the beta-(deoxy)ribonucleoside molecules, with the formation of the corresponding free purine bases and pentose-1-phosphate. The chain is Purine nucleoside phosphorylase DeoD-type from Shewanella amazonensis (strain ATCC BAA-1098 / SB2B).